We begin with the raw amino-acid sequence, 297 residues long: tRNA pseudouridine synthase B (297 aa).

D39 acts as the Nucleophile in catalysis.

It belongs to the pseudouridine synthase TruB family. Type 1 subfamily.

It catalyses the reaction uridine(55) in tRNA = pseudouridine(55) in tRNA. Functionally, responsible for synthesis of pseudouridine from uracil-55 in the psi GC loop of transfer RNAs. The polypeptide is tRNA pseudouridine synthase B (Lactobacillus johnsonii (strain CNCM I-12250 / La1 / NCC 533)).